Reading from the N-terminus, the 263-residue chain is Putative TATA-binding protein pB263R (263 aa).

It belongs to the asfivirus B263R family.

Its function is as follows. Putative TATA-binding protein. In Ornithodoros (relapsing fever ticks), this protein is Putative TATA-binding protein pB263R.